We begin with the raw amino-acid sequence, 365 residues long: 3-dehydroquinate synthase (365 aa).

Residues Gly-107–Asp-111, Thr-131–Ser-132, Lys-144, and Lys-153 contribute to the NAD(+) site. Residues Glu-186, His-251, and His-268 each contribute to the Zn(2+) site.

The protein belongs to the sugar phosphate cyclases superfamily. Dehydroquinate synthase family. Co(2+) is required as a cofactor. Requires Zn(2+) as cofactor. The cofactor is NAD(+).

It localises to the cytoplasm. The enzyme catalyses 7-phospho-2-dehydro-3-deoxy-D-arabino-heptonate = 3-dehydroquinate + phosphate. The protein operates within metabolic intermediate biosynthesis; chorismate biosynthesis; chorismate from D-erythrose 4-phosphate and phosphoenolpyruvate: step 2/7. In terms of biological role, catalyzes the conversion of 3-deoxy-D-arabino-heptulosonate 7-phosphate (DAHP) to dehydroquinate (DHQ). The chain is 3-dehydroquinate synthase from Crocosphaera subtropica (strain ATCC 51142 / BH68) (Cyanothece sp. (strain ATCC 51142)).